The following is a 669-amino-acid chain: DNA mismatch repair protein MutL (669 aa).

2 disordered regions span residues 354 to 402 (NRPA…ENPY) and 448 to 479 (TVSH…PLES). The segment covering 448–468 (TVSHDSPPNRTAPDATTSSSK) has biased composition (polar residues).

This sequence belongs to the DNA mismatch repair MutL/HexB family.

Its function is as follows. This protein is involved in the repair of mismatches in DNA. It is required for dam-dependent methyl-directed DNA mismatch repair. May act as a 'molecular matchmaker', a protein that promotes the formation of a stable complex between two or more DNA-binding proteins in an ATP-dependent manner without itself being part of a final effector complex. The protein is DNA mismatch repair protein MutL of Pectobacterium carotovorum subsp. carotovorum (strain PC1).